The primary structure comprises 254 residues: Protein GltF (254 aa).

Positions 1–25 are cleaved as a signal peptide; the sequence is MFFKKNLTTAAICAALSVAAFSAMA. Residues 213–229 form a helical membrane-spanning segment; that stretch reads PVAITAVTFPLLIDAAV.

To E.coli YhcF.

It localises to the cell membrane. In terms of biological role, involved in induction of the so-called NTR enzymes in response to nitrogen deprivation, as well as in glutamate biosynthesis. May mediate the glutamate-dependent repression of the GLT operon. In Escherichia coli (strain K12), this protein is Protein GltF (gltF).